Reading from the N-terminus, the 240-residue chain is UDP-2,3-diacylglucosamine hydrolase (240 aa).

5 residues coordinate Mn(2+): aspartate 8, histidine 10, aspartate 41, asparagine 79, and histidine 114. 79–80 serves as a coordination point for substrate; sequence NR. Aspartate 122, serine 160, asparagine 164, lysine 167, and histidine 195 together coordinate substrate. 2 residues coordinate Mn(2+): histidine 195 and histidine 197.

Belongs to the LpxH family. The cofactor is Mn(2+).

Its subcellular location is the cell inner membrane. It carries out the reaction UDP-2-N,3-O-bis[(3R)-3-hydroxytetradecanoyl]-alpha-D-glucosamine + H2O = 2-N,3-O-bis[(3R)-3-hydroxytetradecanoyl]-alpha-D-glucosaminyl 1-phosphate + UMP + 2 H(+). It participates in glycolipid biosynthesis; lipid IV(A) biosynthesis; lipid IV(A) from (3R)-3-hydroxytetradecanoyl-[acyl-carrier-protein] and UDP-N-acetyl-alpha-D-glucosamine: step 4/6. Hydrolyzes the pyrophosphate bond of UDP-2,3-diacylglucosamine to yield 2,3-diacylglucosamine 1-phosphate (lipid X) and UMP by catalyzing the attack of water at the alpha-P atom. Involved in the biosynthesis of lipid A, a phosphorylated glycolipid that anchors the lipopolysaccharide to the outer membrane of the cell. The chain is UDP-2,3-diacylglucosamine hydrolase from Yersinia pestis bv. Antiqua (strain Angola).